Here is a 651-residue protein sequence, read N- to C-terminus: Acetyl-coenzyme A synthetase (651 aa).

CoA is bound by residues 189-192, Thr311, and Asn335; that span reads RGGK. ATP-binding positions include 387–389, 411–416, Asp500, and Arg515; these read GEP and DTWWQT. Ser523 serves as a coordination point for CoA. An ATP-binding site is contributed by Arg526. Residues Val537, His539, and Val542 each contribute to the Mg(2+) site. Arg584 contributes to the CoA binding site. N6-acetyllysine is present on Lys609.

It belongs to the ATP-dependent AMP-binding enzyme family. Requires Mg(2+) as cofactor. In terms of processing, acetylated. Deacetylation by the SIR2-homolog deacetylase activates the enzyme.

It catalyses the reaction acetate + ATP + CoA = acetyl-CoA + AMP + diphosphate. Catalyzes the conversion of acetate into acetyl-CoA (AcCoA), an essential intermediate at the junction of anabolic and catabolic pathways. AcsA undergoes a two-step reaction. In the first half reaction, AcsA combines acetate with ATP to form acetyl-adenylate (AcAMP) intermediate. In the second half reaction, it can then transfer the acetyl group from AcAMP to the sulfhydryl group of CoA, forming the product AcCoA. The chain is Acetyl-coenzyme A synthetase from Rhizobium etli (strain CIAT 652).